The primary structure comprises 221 residues: Small ribosomal subunit protein uS5 (221 aa).

Residues 46-109 (IKDEVIDIKR…INAKLNIMEI (64 aa)) form the S5 DRBM domain.

Belongs to the universal ribosomal protein uS5 family. Part of the 30S ribosomal subunit. Contacts protein S4.

Its function is as follows. With S4 and S12 plays an important role in translational accuracy. This is Small ribosomal subunit protein uS5 from Thermoplasma volcanium (strain ATCC 51530 / DSM 4299 / JCM 9571 / NBRC 15438 / GSS1).